Reading from the N-terminus, the 261-residue chain is 3-hydroxyacyl-CoA dehydrogenase type-2 (261 aa).

Residue Ala-2 is modified to N-acetylalanine. Residues Ser-20, Leu-22, and Asp-41 each coordinate NAD(+). Lys-53 carries the post-translational modification N6-acetyllysine; alternate. Lys-53 is modified (N6-succinyllysine; alternate). 2 residues coordinate NAD(+): Asp-64 and Val-65. Position 69 is an N6-acetyllysine (Lys-69). An NAD(+)-binding site is contributed by Cys-91. N6-acetyllysine is present on residues Lys-99 and Lys-105. Ser-155 contacts substrate. Residues Tyr-168, Lys-172, Phe-201, and Thr-203 each coordinate NAD(+). Tyr-168 serves as the catalytic Proton acceptor. The residue at position 212 (Lys-212) is an N6-acetyllysine; alternate. The residue at position 212 (Lys-212) is an N6-succinyllysine; alternate.

It belongs to the short-chain dehydrogenases/reductases (SDR) family. As to quaternary structure, homotetramer. Component of mitochondrial ribonuclease P, a complex composed of TRMT10C/MRPP1, HSD17B10/MRPP2 and PRORP/MRPP3. Interacts with TRMT10C/MRPP1; forming the MRPP1-MRPP2 subcomplex of the mitochondrial ribonuclease P complex. As to expression, ubiquitously expressed in normal tissues but is overexpressed in neurons affected in AD.

It is found in the mitochondrion. It localises to the mitochondrion matrix. The protein localises to the mitochondrion nucleoid. The enzyme catalyses a (3S)-3-hydroxyacyl-CoA + NAD(+) = a 3-oxoacyl-CoA + NADH + H(+). It carries out the reaction (2S,3S)-3-hydroxy-2-methylbutanoyl-CoA + NAD(+) = 2-methyl-3-oxobutanoyl-CoA + NADH + H(+). It catalyses the reaction testosterone + NAD(+) = androst-4-ene-3,17-dione + NADH + H(+). The catalysed reaction is 5alpha-androstane-3alpha,17beta-diol + NAD(+) = 17beta-hydroxy-5alpha-androstan-3-one + NADH + H(+). The enzyme catalyses 17beta-estradiol + NAD(+) = estrone + NADH + H(+). It carries out the reaction cholate + NAD(+) = 3alpha,12alpha-dihydroxy-7-oxo-5beta-cholanate + NADH + H(+). It catalyses the reaction (3S)-3-hydroxybutanoyl-CoA + NAD(+) = acetoacetyl-CoA + NADH + H(+). The catalysed reaction is (3S)-hydroxyoctanoyl-CoA + NAD(+) = 3-oxooctanoyl-CoA + NADH + H(+). The enzyme catalyses (3S)-hydroxyhexadecanoyl-CoA + NAD(+) = 3-oxohexadecanoyl-CoA + NADH + H(+). It carries out the reaction 17beta-hydroxy-5alpha-androstan-3-one + NAD(+) = 5alpha-androstan-3,17-dione + NADH + H(+). It catalyses the reaction 5alpha-pregnan-20beta-ol-3-one + NAD(+) = 5alpha-pregnane-3,20-dione + NADH + H(+). The catalysed reaction is 3alpha-hydroxy-5alpha-pregnan-20-one + NAD(+) = 5alpha-pregnane-3,20-dione + NADH + H(+). The enzyme catalyses cortisone + NAD(+) = 17alpha-hydroxypregn-4-en-3,11,20-trione-21-al + NADH + H(+). It carries out the reaction 11-dehydrocorticosterone + NAD(+) = pregn-4-ene-3,11,20,21-tetraone + NADH + H(+). It catalyses the reaction cortisol + NAD(+) = 11beta,17alpha-dihydroxypregn-4-ene-3,20,21-trione + NADH + H(+). The catalysed reaction is chenodeoxycholate + NAD(+) = 7-oxolithocholate + NADH + H(+). The enzyme catalyses ursodeoxycholate + NAD(+) = 7-oxolithocholate + NADH + H(+). It carries out the reaction 3beta,7beta-dihydroxy-5beta-cholan-24-oate + NAD(+) = 3beta-hydroxy-7-oxo-5beta-cholan-24-oate + NADH + H(+). Its pathway is amino-acid degradation; L-isoleucine degradation. It functions in the pathway lipid metabolism; fatty acid beta-oxidation. It participates in steroid metabolism. The protein operates within lipid metabolism; bile acid biosynthesis. The phospholipase C-like activity toward cardiolipin is inhibited by amyloid-beta peptide. Its function is as follows. Mitochondrial dehydrogenase involved in pathways of fatty acid, branched-chain amino acid and steroid metabolism. Acts as (S)-3-hydroxyacyl-CoA dehydrogenase in mitochondrial fatty acid beta-oxidation, a major degradation pathway of fatty acids. Catalyzes the third step in the beta-oxidation cycle, namely the reversible conversion of (S)-3-hydroxyacyl-CoA to 3-ketoacyl-CoA. Preferentially accepts straight medium- and short-chain acyl-CoA substrates with highest efficiency for (3S)-hydroxybutanoyl-CoA. Acts as 3-hydroxy-2-methylbutyryl-CoA dehydrogenase in branched-chain amino acid catabolic pathway. Catalyzes the oxidation of 3-hydroxy-2-methylbutanoyl-CoA into 2-methyl-3-oxobutanoyl-CoA, a step in isoleucine degradation pathway. Has hydroxysteroid dehydrogenase activity toward steroid hormones and bile acids. Catalyzes the oxidation of 3alpha-, 17beta-, 20beta- and 21-hydroxysteroids and 7alpha- and 7beta-hydroxy bile acids. Oxidizes allopregnanolone/brexanolone at the 3alpha-hydroxyl group, which is known to be critical for the activation of gamma-aminobutyric acid receptors (GABAARs) chloride channel. Has phospholipase C-like activity toward cardiolipin and its oxidized species. Likely oxidizes the 2'-hydroxyl in the head group of cardiolipin to form a ketone intermediate that undergoes nucleophilic attack by water and fragments into diacylglycerol, dihydroxyacetone and orthophosphate. Has higher affinity for cardiolipin with oxidized fatty acids and may degrade these species during the oxidative stress response to protect cells from apoptosis. By interacting with intracellular amyloid-beta, it may contribute to the neuronal dysfunction associated with Alzheimer disease (AD). Essential for structural and functional integrity of mitochondria. In terms of biological role, in addition to mitochondrial dehydrogenase activity, moonlights as a component of mitochondrial ribonuclease P, a complex that cleaves tRNA molecules in their 5'-ends. Together with TRMT10C/MRPP1, forms a subcomplex of the mitochondrial ribonuclease P, named MRPP1-MRPP2 subcomplex, which displays functions that are independent of the ribonuclease P activity. The MRPP1-MRPP2 subcomplex catalyzes the formation of N(1)-methylguanine and N(1)-methyladenine at position 9 (m1G9 and m1A9, respectively) in tRNAs; HSD17B10/MRPP2 acting as a non-catalytic subunit. The MRPP1-MRPP2 subcomplex also acts as a tRNA maturation platform: following 5'-end cleavage by the mitochondrial ribonuclease P complex, the MRPP1-MRPP2 subcomplex enhances the efficiency of 3'-processing catalyzed by ELAC2, retains the tRNA product after ELAC2 processing and presents the nascent tRNA to the mitochondrial CCA tRNA nucleotidyltransferase TRNT1 enzyme. Associates with mitochondrial DNA complexes at the nucleoids to initiate RNA processing and ribosome assembly. The sequence is that of 3-hydroxyacyl-CoA dehydrogenase type-2 (HSD17B10) from Homo sapiens (Human).